A 1044-amino-acid polypeptide reads, in one-letter code: Ribonucleoside-diphosphate reductase subunit alpha (1044 aa).

3 consecutive ATP-cone domains span residues 9 to 111 (YTIV…KAER), 118 to 217 (IAII…ARAR), and 235 to 325 (YVVQ…ETLG). Substrate-binding positions include Thr-440, 455 to 456 (SC), Gly-484, 668 to 672 (NLCTE), and 855 to 859 (PTATI). Residues Cys-456 and Cys-685 are joined by a disulfide bond. The active-site Proton acceptor is Asn-668. The Cysteine radical intermediate role is filled by Cys-670. Glu-672 (proton acceptor) is an active-site residue.

The protein belongs to the ribonucleoside diphosphate reductase large chain family. In terms of assembly, tetramer of two alpha and two beta subunits.

The catalysed reaction is a 2'-deoxyribonucleoside 5'-diphosphate + [thioredoxin]-disulfide + H2O = a ribonucleoside 5'-diphosphate + [thioredoxin]-dithiol. With respect to regulation, under complex allosteric control mediated by deoxynucleoside triphosphates and ATP binding. The type of nucleotide bound at the specificity site determines substrate preference. It seems probable that ATP makes the enzyme reduce CDP and UDP, dGTP favors ADP reduction and dTTP favors GDP reduction. Functionally, provides the precursors necessary for DNA synthesis. Catalyzes the biosynthesis of deoxyribonucleotides from the corresponding ribonucleotides. The protein is Ribonucleoside-diphosphate reductase subunit alpha (nrdA) of Chlamydia pneumoniae (Chlamydophila pneumoniae).